The sequence spans 92 residues: Small ribosomal subunit protein bS20 (92 aa).

Residues Met-1–Leu-24 are disordered.

The protein belongs to the bacterial ribosomal protein bS20 family.

In terms of biological role, binds directly to 16S ribosomal RNA. The protein is Small ribosomal subunit protein bS20 of Paraburkholderia xenovorans (strain LB400).